We begin with the raw amino-acid sequence, 401 residues long: Deubiquitinase and deneddylase Dub1 (401 aa).

The segment covering 1 to 11 (MLSPTNSTSKT) has biased composition (polar residues). The segment at 1–24 (MLSPTNSTSKTAPVPPRDSSKPVL) is disordered. Residues 40-60 (TALAVLLVVVTLGLILLFYSF) form a helical membrane-spanning segment. Positions 77-130 (KEQPTISIPVPLPSPPLAVPRPSTPPPPVISRPSTPSAPKPSTPPPLLPKAPKP) are disordered. Pro residues predominate over residues 86-128 (VPLPSPPLAVPRPSTPPPPVISRPSTPSAPKPSTPPPLLPKAP). Catalysis depends on residues H275, D292, and C345.

This sequence belongs to the peptidase C48 family. Binds to host NFKBIA.

The protein localises to the secreted. It is found in the host cell. The protein resides in the membrane. In terms of biological role, effector proteins function to alter host cell physiology and promote bacterial survival in host tissues. This protease possesses deubiquitinating and deneddylating activities. Impairs ubiquitination and degradation of NF-kappa-B inhibitor alpha (NFKBIA), thereby preventing NF-kappa-B activation. The polypeptide is Deubiquitinase and deneddylase Dub1 (cdu1) (Chlamydia trachomatis serovar L2 (strain ATCC VR-902B / DSM 19102 / 434/Bu)).